We begin with the raw amino-acid sequence, 287 residues long: Bifunctional protein FolD (287 aa).

Residues glycine 166–serine 168 and isoleucine 232 each bind NADP(+).

This sequence belongs to the tetrahydrofolate dehydrogenase/cyclohydrolase family. As to quaternary structure, homodimer.

It catalyses the reaction (6R)-5,10-methylene-5,6,7,8-tetrahydrofolate + NADP(+) = (6R)-5,10-methenyltetrahydrofolate + NADPH. The catalysed reaction is (6R)-5,10-methenyltetrahydrofolate + H2O = (6R)-10-formyltetrahydrofolate + H(+). The protein operates within one-carbon metabolism; tetrahydrofolate interconversion. In terms of biological role, catalyzes the oxidation of 5,10-methylenetetrahydrofolate to 5,10-methenyltetrahydrofolate and then the hydrolysis of 5,10-methenyltetrahydrofolate to 10-formyltetrahydrofolate. This chain is Bifunctional protein FolD, found in Buchnera aphidicola subsp. Baizongia pistaciae (strain Bp).